A 218-amino-acid polypeptide reads, in one-letter code: Ras-related protein RABA1h (218 aa).

20-27 contacts GTP; sequence GDSGVGKS. The Effector region signature appears at 42–50; the sequence is SRSTIGVEF. GTP-binding positions include 68–72, 126–129, and 156–157; these read DTAGQ, NKAD, and SA. 2 S-geranylgeranyl cysteine lipidation sites follow: cysteine 215 and cysteine 216.

Belongs to the small GTPase superfamily. Rab family.

It localises to the cell membrane. In terms of biological role, intracellular vesicle trafficking and protein transport. The chain is Ras-related protein RABA1h (RABA1H) from Arabidopsis thaliana (Mouse-ear cress).